A 455-amino-acid polypeptide reads, in one-letter code: MTVDTIFAPATARGRAGVAIVRLSGPRAATALTLLAGRLPEARRATRAALRSPPSGPGPTGPGPEEGGEVLDDALVLWFPAPASFTGEDVAELHIHGGRAVLAAVLGALGDLPGLRPAEAGEFSRRAFLNGRLDLTAAEALADLVDAETQAQRRQALRQADGALVRLYEGWRKTGIGLLAHLEAVLDFPDEDLPPEVETAVRGGIGALADALAGHLDDRHRGERLRDGLQVAVVGAPNVGKSSLVNRLARREAAIVSDIAGTTRDIVEVALDLGGYPLVVADTAGLRETSDGIEAEGVRRARARLAAADLTLAVSDGTVENGADDPAADLTGEAVLRVVTKRDLLDPRAVERWLARGALPVSTLTGEGLDALEAALESRARAFFEGDGTPALTRQRHRSALMEARAALRRAAEAPLAELVAEDLRLALRAIGRITGRVTVDDVLDVIFRDFCIGK.

(6S)-5-formyl-5,6,7,8-tetrahydrofolate is bound at residue arginine 22. Positions 43–67 (RRATRAALRSPPSGPGPTGPGPEEG) are disordered. Positions 92 and 132 each coordinate (6S)-5-formyl-5,6,7,8-tetrahydrofolate. One can recognise a TrmE-type G domain in the interval 228-381 (GLQVAVVGAP…LEAALESRAR (154 aa)). Position 238 (asparagine 238) interacts with K(+). GTP is bound by residues 238-243 (NVGKSS), 257-263 (SDIAGTT), and 282-285 (DTAG). Serine 242 provides a ligand contact to Mg(2+). Residues serine 257, isoleucine 259, and threonine 262 each contribute to the K(+) site. Threonine 263 provides a ligand contact to Mg(2+). (6S)-5-formyl-5,6,7,8-tetrahydrofolate is bound at residue lysine 455.

This sequence belongs to the TRAFAC class TrmE-Era-EngA-EngB-Septin-like GTPase superfamily. TrmE GTPase family. As to quaternary structure, homodimer. Heterotetramer of two MnmE and two MnmG subunits. Requires K(+) as cofactor.

The protein localises to the cytoplasm. Exhibits a very high intrinsic GTPase hydrolysis rate. Involved in the addition of a carboxymethylaminomethyl (cmnm) group at the wobble position (U34) of certain tRNAs, forming tRNA-cmnm(5)s(2)U34. This is tRNA modification GTPase MnmE from Rhodospirillum rubrum (strain ATCC 11170 / ATH 1.1.1 / DSM 467 / LMG 4362 / NCIMB 8255 / S1).